The sequence spans 887 residues: Alanine--tRNA ligase (887 aa).

Residues H564, H568, C676, and H680 each contribute to the Zn(2+) site.

The protein belongs to the class-II aminoacyl-tRNA synthetase family. Zn(2+) serves as cofactor.

It localises to the cytoplasm. It catalyses the reaction tRNA(Ala) + L-alanine + ATP = L-alanyl-tRNA(Ala) + AMP + diphosphate. Functionally, catalyzes the attachment of alanine to tRNA(Ala) in a two-step reaction: alanine is first activated by ATP to form Ala-AMP and then transferred to the acceptor end of tRNA(Ala). Also edits incorrectly charged Ser-tRNA(Ala) and Gly-tRNA(Ala) via its editing domain. This chain is Alanine--tRNA ligase, found in Agrobacterium fabrum (strain C58 / ATCC 33970) (Agrobacterium tumefaciens (strain C58)).